Consider the following 216-residue polypeptide: Adenylate kinase (216 aa).

10–15 (GSGKGT) lines the ATP pocket. The tract at residues 30-59 (STGDMLRAAVKEGTPMGVKAKAKMDAGALV) is NMP. AMP contacts are provided by residues Thr-31, Arg-36, 57-59 (ALV), 85-88 (GFPR), and Gln-92. Residues 126–163 (GRRTCRDCGKMYHVEFDAPAVADKCDKCGGQLFQRDDD) are LID. Arg-127 serves as a coordination point for ATP. Zn(2+) contacts are provided by Cys-130, Cys-133, Cys-150, and Cys-153. 2 residues coordinate AMP: Arg-160 and Arg-171. Lys-199 contributes to the ATP binding site.

It belongs to the adenylate kinase family. Monomer.

The protein resides in the cytoplasm. It catalyses the reaction AMP + ATP = 2 ADP. It functions in the pathway purine metabolism; AMP biosynthesis via salvage pathway; AMP from ADP: step 1/1. In terms of biological role, catalyzes the reversible transfer of the terminal phosphate group between ATP and AMP. Plays an important role in cellular energy homeostasis and in adenine nucleotide metabolism. This is Adenylate kinase from Syntrophotalea carbinolica (strain DSM 2380 / NBRC 103641 / GraBd1) (Pelobacter carbinolicus).